The following is a 643-amino-acid chain: Threonine--tRNA ligase (643 aa).

Positions 1 to 61 (MVAISLPDGS…TTDASVSLIT (61 aa)) constitute a TGS domain. The catalytic stretch occupies residues 243–534 (DHRRVGQEMD…LIENCAGRFP (292 aa)). The Zn(2+) site is built by Cys-334, His-385, and His-511.

It belongs to the class-II aminoacyl-tRNA synthetase family. Homodimer. Zn(2+) serves as cofactor.

The protein resides in the cytoplasm. The enzyme catalyses tRNA(Thr) + L-threonine + ATP = L-threonyl-tRNA(Thr) + AMP + diphosphate + H(+). Functionally, catalyzes the attachment of threonine to tRNA(Thr) in a two-step reaction: L-threonine is first activated by ATP to form Thr-AMP and then transferred to the acceptor end of tRNA(Thr). Also edits incorrectly charged L-seryl-tRNA(Thr). The sequence is that of Threonine--tRNA ligase from Rhodospirillum rubrum (strain ATCC 11170 / ATH 1.1.1 / DSM 467 / LMG 4362 / NCIMB 8255 / S1).